The primary structure comprises 360 residues: UDP-arabinopyranose mutase 2 (360 aa).

Position 2 is an N-acetylvaline (Val-2). Residues Asp-110 to Asp-112 carry the DXD motif motif. A glycan (N-linked (Glc...) arginine) is linked at Arg-158.

This sequence belongs to the RGP family. As to quaternary structure, heteromers with RGP1, RGP4 and RGP5. Requires Mn(2+) as cofactor. It depends on Mg(2+) as a cofactor. Post-translationally, reversibly glycosylated in vitro by UDP-glucose, UDP-xylose and UDP-galactose, but not UDP-mannose. In terms of tissue distribution, predominantly expressed in shoot and root apical meristems. Expressed in epidermal cells of leaves, inflorescence stems and seed coat. Expressed in pollen.

The protein resides in the cytoplasm. It localises to the cytosol. The protein localises to the golgi apparatus. The catalysed reaction is UDP-beta-L-arabinofuranose = UDP-beta-L-arabinopyranose. UDP-L-arabinose mutase involved in the biosynthesis of cell wall non-cellulosic polysaccharides. Catalyzes the interconvertion of UDP-L-arabinopyranose (UDP-Arap) and UDP-L-arabinofuranose (UDP-Araf) in vitro. Preferentially catalyzes the formation of UDP-Arap from UDP-Araf. At thermodynamic equilibrium in vitro the ratio of the pyranose form over the furanose form is 95:5. Is not active on other UDP-sugars (UDP-Gal, UDP-Xyl, UDP-Glc, GDP-Man and GDP-Fuc). Functions redundantly with RGP2 and is essential for proper cell walls and pollen development. Probably involved in the formation of the pectocellulosic cell wall layer intine. Is probably active as heteromer in vivo. In Arabidopsis thaliana (Mouse-ear cress), this protein is UDP-arabinopyranose mutase 2.